Consider the following 264-residue polypeptide: 3-methyl-2-oxobutanoate hydroxymethyltransferase (264 aa).

Residues aspartate 45 and aspartate 84 each coordinate Mg(2+). 3-methyl-2-oxobutanoate is bound by residues 45-46, aspartate 84, and lysine 112; that span reads DS. Residue glutamate 114 coordinates Mg(2+). Glutamate 181 acts as the Proton acceptor in catalysis.

It belongs to the PanB family. As to quaternary structure, homodecamer; pentamer of dimers. The cofactor is Mg(2+).

The protein localises to the cytoplasm. It catalyses the reaction 3-methyl-2-oxobutanoate + (6R)-5,10-methylene-5,6,7,8-tetrahydrofolate + H2O = 2-dehydropantoate + (6S)-5,6,7,8-tetrahydrofolate. It participates in cofactor biosynthesis; (R)-pantothenate biosynthesis; (R)-pantoate from 3-methyl-2-oxobutanoate: step 1/2. In terms of biological role, catalyzes the reversible reaction in which hydroxymethyl group from 5,10-methylenetetrahydrofolate is transferred onto alpha-ketoisovalerate to form ketopantoate. This is 3-methyl-2-oxobutanoate hydroxymethyltransferase from Photobacterium profundum (strain SS9).